We begin with the raw amino-acid sequence, 132 residues long: Small ribosomal subunit protein uS8 (132 aa).

Belongs to the universal ribosomal protein uS8 family. As to quaternary structure, part of the 30S ribosomal subunit. Contacts proteins S5 and S12.

Functionally, one of the primary rRNA binding proteins, it binds directly to 16S rRNA central domain where it helps coordinate assembly of the platform of the 30S subunit. The chain is Small ribosomal subunit protein uS8 from Sinorhizobium fredii (strain NBRC 101917 / NGR234).